The primary structure comprises 196 residues: Potassium-transporting ATPase KdpC subunit (196 aa).

A helical membrane pass occupies residues 7 to 27; the sequence is PALVLFFVLTLLTGVAYPLAV.

Belongs to the KdpC family. The system is composed of three essential subunits: KdpA, KdpB and KdpC.

It localises to the cell inner membrane. Functionally, part of the high-affinity ATP-driven potassium transport (or Kdp) system, which catalyzes the hydrolysis of ATP coupled with the electrogenic transport of potassium into the cytoplasm. This subunit acts as a catalytic chaperone that increases the ATP-binding affinity of the ATP-hydrolyzing subunit KdpB by the formation of a transient KdpB/KdpC/ATP ternary complex. The sequence is that of Potassium-transporting ATPase KdpC subunit from Polaromonas naphthalenivorans (strain CJ2).